The sequence spans 434 residues: Ribosomal protein uS12 methylthiotransferase RimO (434 aa).

One can recognise an MTTase N-terminal domain in the interval 6–122 (SKLYLLTLGC…IIAELGGHYK (117 aa)). [4Fe-4S] cluster is bound by residues C15, C51, C85, C146, C150, and C153. Residues 132-361 (LTPPYFSYLK…MAAQEEIAYA (230 aa)) form the Radical SAM core domain. Positions 364 to 434 (QALVGSFMPV…AFDLFGSLVL (71 aa)) constitute a TRAM domain.

This sequence belongs to the methylthiotransferase family. RimO subfamily. [4Fe-4S] cluster serves as cofactor.

The protein resides in the cytoplasm. It carries out the reaction L-aspartate(89)-[ribosomal protein uS12]-hydrogen + (sulfur carrier)-SH + AH2 + 2 S-adenosyl-L-methionine = 3-methylsulfanyl-L-aspartate(89)-[ribosomal protein uS12]-hydrogen + (sulfur carrier)-H + 5'-deoxyadenosine + L-methionine + A + S-adenosyl-L-homocysteine + 2 H(+). In terms of biological role, catalyzes the methylthiolation of an aspartic acid residue of ribosomal protein uS12. This chain is Ribosomal protein uS12 methylthiotransferase RimO, found in Chloroherpeton thalassium (strain ATCC 35110 / GB-78).